The following is a 517-amino-acid chain: MDIVGGQNLRQMWDDLAEVYGNKTALIFESSEGVVRQFSYASLNEEINRTANLFLASGIQKGDNVALHLDNCPEFFFCWFGLAKIGAIMVPINARLLREESAWILQNSRAQLIVTSAEFYPMYRQILLEDDTLLNHICLIGENAPVEDNVSHFSQLKDQQPATLCYAPPLSTDDTAEILFTSGTTSRPKGVVITHYNLRFAGYYSSWQCALREDDVYLTVMPAFHIDCQCTAAMAAFSAGSTFVLIEKYSARAFWGQVRKYRATVTECIPMMIRTLMVQPASPEERQHCLREVMFYLNLSVQEKDAFIARFGVRLLTSYGMTETIVGIIGDRPGDKRRWPSIGRPGFCYEADIRDEQNRSLPAGEIGEICIKGVPGKTIFKEYYARPEATAKALEANGWLHTGDSGYRDEEGFFYFVDRRCNMIKRGGENVSCIELENIISAHPKIQDIVVIGIHDSIRDEAIKAFVVLNEGETLTEEEFFAFCEQNMAKFKVPSFLEIRNDLPRNCSGKIIKKNLK.

It belongs to the ATP-dependent AMP-binding enzyme family.

It carries out the reaction 4-(trimethylamino)butanoate + ATP + CoA = 4-(trimethylamino)butanoyl-CoA + AMP + diphosphate. The enzyme catalyses crotonobetaine + ATP + CoA = crotonobetainyl-CoA + AMP + diphosphate. It catalyses the reaction (R)-carnitine + ATP + CoA = (R)-carnitinyl-CoA + AMP + diphosphate. The protein operates within amine and polyamine metabolism; carnitine metabolism. Its function is as follows. Catalyzes the transfer of CoA to carnitine, generating the initial carnitinyl-CoA needed for the CaiB reaction cycle. Also has activity toward crotonobetaine and gamma-butyrobetaine. The polypeptide is Crotonobetaine/carnitine--CoA ligase (Citrobacter koseri (strain ATCC BAA-895 / CDC 4225-83 / SGSC4696)).